We begin with the raw amino-acid sequence, 296 residues long: GTPase Era (296 aa).

One can recognise an Era-type G domain in the interval K3–E170. The tract at residues G11–S18 is G1. Position 11–18 (G11–S18) interacts with GTP. Residues Q37–N41 are G2. The tract at residues D58 to G61 is G3. Residues D58 to I62 and N120 to D123 each bind GTP. Residues N120–D123 form a G4 region. The interval I149 to A151 is G5. One can recognise a KH type-2 domain in the interval L201–E278.

This sequence belongs to the TRAFAC class TrmE-Era-EngA-EngB-Septin-like GTPase superfamily. Era GTPase family. In terms of assembly, monomer.

The protein localises to the cytoplasm. Its subcellular location is the cell membrane. Functionally, an essential GTPase that binds both GDP and GTP, with rapid nucleotide exchange. Plays a role in 16S rRNA processing and 30S ribosomal subunit biogenesis and possibly also in cell cycle regulation and energy metabolism. This Clostridium botulinum (strain Kyoto / Type A2) protein is GTPase Era.